Consider the following 445-residue polypeptide: Chromosomal replication initiator protein DnaA (445 aa).

The interval 1 to 73 (MSTHLTETWE…VNALKLLTSK (73 aa)) is domain I, interacts with DnaA modulators. The segment at 73-106 (KKYNIDFIVTTEEKIEKNHNNEKSNIVVNDEMST) is domain II. A domain III, AAA+ region region spans residues 107–323 (MLNPKYTFDS…GALIRIVAFS (217 aa)). 4 residues coordinate ATP: Gly151, Gly153, Lys154, and Thr155. Residues 324–445 (SLTNKEISVD…NDLNKRINQK (122 aa)) form a domain IV, binds dsDNA region.

The protein belongs to the DnaA family. As to quaternary structure, oligomerizes as a right-handed, spiral filament on DNA at oriC.

It is found in the cytoplasm. Plays an essential role in the initiation and regulation of chromosomal replication. ATP-DnaA binds to the origin of replication (oriC) to initiate formation of the DNA replication initiation complex once per cell cycle. Binds the DnaA box (a 9 base pair repeat at the origin) and separates the double-stranded (ds)DNA. Forms a right-handed helical filament on oriC DNA; dsDNA binds to the exterior of the filament while single-stranded (ss)DNA is stabiized in the filament's interior. The ATP-DnaA-oriC complex binds and stabilizes one strand of the AT-rich DNA unwinding element (DUE), permitting loading of DNA polymerase. After initiation quickly degrades to an ADP-DnaA complex that is not apt for DNA replication. Binds acidic phospholipids. In Clostridium botulinum (strain Loch Maree / Type A3), this protein is Chromosomal replication initiator protein DnaA.